A 213-amino-acid chain; its full sequence is Pyrrolidone-carboxylate peptidase (213 aa).

Active-site residues include glutamate 78, cysteine 141, and histidine 165.

This sequence belongs to the peptidase C15 family. In terms of assembly, homotetramer.

Its subcellular location is the cytoplasm. The enzyme catalyses Release of an N-terminal pyroglutamyl group from a polypeptide, the second amino acid generally not being Pro.. Functionally, removes 5-oxoproline from various penultimate amino acid residues except L-proline. This Clostridium botulinum (strain Alaska E43 / Type E3) protein is Pyrrolidone-carboxylate peptidase.